A 222-amino-acid chain; its full sequence is 3,4-dihydroxy-2-butanone 4-phosphate synthase (222 aa).

Residues 37 to 38 (RE), Asp-42, 150 to 154 (RPGHT), and Glu-174 contribute to the D-ribulose 5-phosphate site. Glu-38 contacts Mg(2+). A Mg(2+)-binding site is contributed by His-153.

It belongs to the DHBP synthase family. In terms of assembly, homodimer. Mg(2+) is required as a cofactor. Mn(2+) serves as cofactor.

It catalyses the reaction D-ribulose 5-phosphate = (2S)-2-hydroxy-3-oxobutyl phosphate + formate + H(+). It participates in cofactor biosynthesis; riboflavin biosynthesis; 2-hydroxy-3-oxobutyl phosphate from D-ribulose 5-phosphate: step 1/1. Its function is as follows. Catalyzes the conversion of D-ribulose 5-phosphate to formate and 3,4-dihydroxy-2-butanone 4-phosphate. The sequence is that of 3,4-dihydroxy-2-butanone 4-phosphate synthase from Chlorobium limicola (strain DSM 245 / NBRC 103803 / 6330).